Reading from the N-terminus, the 404-residue chain is MRSQPHVLGIVLAGGEGKRLYPLTADRAKPAVPFGGAYRLIDFVLSNLVNAGYLRLCVLTQYKSHSLDRHISQTWRLSGFAGEYITPVPAQQRLGPRWYTGSADAILQSLNLVYDEDPEYIVVFGADHVYRMDPEQMVQHHIESGAGVTVAGIRVPRSEAFAFGCIDSDESGRIVQFLEKPAHPPGTPDDPNMTFASMGNYVFTTKVLVDAIRADSENSDSDHDMGGDIIPALVEAGEASVYDFKDNVVPGATDRDRGYWRDVGTLDAFYDAHMDLVSVHPIFNLYNRRWPIRGETENLAPAKFVQGGLAQESVVGAGCILSAATVRNSVLSSNVMVDSGATVEGSVLMPGVRIGKGAVVRRAILDKNVVVGDGEIIGVDLERDKQRFAVSNGGVVAIGKGVWI.

Residues Tyr99, Gly164, 179–180, and Ser197 contribute to the alpha-D-glucose 1-phosphate site; that span reads EK.

The protein belongs to the bacterial/plant glucose-1-phosphate adenylyltransferase family. As to quaternary structure, homotetramer.

It catalyses the reaction alpha-D-glucose 1-phosphate + ATP + H(+) = ADP-alpha-D-glucose + diphosphate. The protein operates within glycan biosynthesis; glycogen biosynthesis. In terms of biological role, involved in the biosynthesis of ADP-glucose, a building block required for the elongation reactions to produce glycogen. Catalyzes the reaction between ATP and alpha-D-glucose 1-phosphate (G1P) to produce pyrophosphate and ADP-Glc. This chain is Glucose-1-phosphate adenylyltransferase, found in Rhodococcus opacus (strain B4).